Reading from the N-terminus, the 610-residue chain is Elongation factor 4 (610 aa).

The tr-type G domain maps to 11–193 (ENIRNFSIIA…QIVEKVPAPS (183 aa)). Residues 23–28 (DHGKST) and 140–143 (NKID) each bind GTP.

It belongs to the TRAFAC class translation factor GTPase superfamily. Classic translation factor GTPase family. LepA subfamily.

It localises to the cell membrane. It carries out the reaction GTP + H2O = GDP + phosphate + H(+). Required for accurate and efficient protein synthesis under certain stress conditions. May act as a fidelity factor of the translation reaction, by catalyzing a one-codon backward translocation of tRNAs on improperly translocated ribosomes. Back-translocation proceeds from a post-translocation (POST) complex to a pre-translocation (PRE) complex, thus giving elongation factor G a second chance to translocate the tRNAs correctly. Binds to ribosomes in a GTP-dependent manner. The chain is Elongation factor 4 from Streptococcus equi subsp. equi (strain 4047).